The sequence spans 100 residues: Small ribosomal subunit protein uS14c (100 aa).

The protein belongs to the universal ribosomal protein uS14 family. Part of the 30S ribosomal subunit.

The protein localises to the plastid. The protein resides in the chloroplast. Binds 16S rRNA, required for the assembly of 30S particles. The protein is Small ribosomal subunit protein uS14c of Chlorella vulgaris (Green alga).